The following is a 189-amino-acid chain: UPF0316 protein Sca_1484 (189 aa).

3 consecutive transmembrane segments (helical) span residues 8–28 (PWLM…CLTV), 40–60 (VAAA…GLVM), and 66–86 (FQNI…GMKI).

The protein belongs to the UPF0316 family.

It localises to the cell membrane. This chain is UPF0316 protein Sca_1484, found in Staphylococcus carnosus (strain TM300).